The sequence spans 111 residues: Cytochrome bo(3) ubiquinol oxidase subunit 4 (111 aa).

The Cytoplasmic portion of the chain corresponds to 1–17 (MSSAAHDNHGAGHGSLG). The helical transmembrane segment at 18–38 (SYAIGFVLSVILTAIPFYMVM) threads the bilayer. Residues 39–46 (DGGFSRHA) are Periplasmic-facing. A helical membrane pass occupies residues 47-67 (TILTMVVLGLVQVVVHLICFL). The Cytoplasmic portion of the chain corresponds to 68–80 (HMNMSSEGRWNVM). The chain crosses the membrane as a helical span at residues 81–101 (AFIFTVIVILLVVGLSLWIIF). The Periplasmic portion of the chain corresponds to 102 to 111 (SADMLMMPMP).

It belongs to the cytochrome c oxidase bacterial subunit 4 family. In terms of assembly, heterooctamer of two A chains, two B chains, two C chains and two D chains.

The protein localises to the cell inner membrane. Its function is as follows. Cytochrome bo(3) ubiquinol terminal oxidase is the component of the aerobic respiratory chain of E.coli that predominates when cells are grown at high aeration. Has proton pump activity across the membrane in addition to electron transfer, pumping 2 protons/electron. This chain is Cytochrome bo(3) ubiquinol oxidase subunit 4 (cyoD), found in Pseudomonas aeruginosa (strain ATCC 15692 / DSM 22644 / CIP 104116 / JCM 14847 / LMG 12228 / 1C / PRS 101 / PAO1).